The primary structure comprises 237 residues: N-demethylindolmycin N-methyltransferase (237 aa).

It belongs to the methyltransferase superfamily.

It catalyses the reaction N-demethylindolmycin + S-adenosyl-L-methionine = indolmycin + S-adenosyl-L-homocysteine + H(+). Its function is as follows. Involved in the biosynthesis of the antibiotic indolmycin, an inhibitor of the bacterial tryptophan-tRNA synthetases. Catalyzes the methylation of N-demethylindolmycin to yield indolmycin, with S-adenosylmethionine (AdoMet) acting as the methyl donor. The sequence is that of N-demethylindolmycin N-methyltransferase from Streptomyces griseus.